The following is a 460-amino-acid chain: Decaprenylphosphoryl-beta-D-ribose oxidase (460 aa).

The 175-residue stretch at threonine 19–threonine 193 folds into the FAD-binding PCMH-type domain. Residues alanine 52–asparagine 62, glycine 116, threonine 121–glycine 124, cysteine 128–histidine 131, isoleucine 183, and tyrosine 414 each bind FAD.

This sequence belongs to the DprE1 family. In terms of assembly, monomer. Interacts with DprE2 to form an epimerase complex.

Its subcellular location is the periplasm. The enzyme catalyses trans,octa-cis-decaprenylphospho-beta-D-ribofuranose + FAD + H(+) = trans,octa-cis-decaprenylphospho-beta-D-erythro-pentofuranosid-2-ulose + FADH2. Its pathway is cell wall biogenesis; cell wall polysaccharide biosynthesis. Is inhibited by 8-nitro-benzothiazinones (BTZs) such as BTZ043; BTZs are a new class of antimycobacterial agents that block formation of both cell-wall lipoarabinomannan and arabinogalactan via inhibition of decaprenyl-phospho-arabinose (DPA) synthesis. BTZs are suicide inhibitors that act via covalent modification of DprE1; the essential nitro group of these compounds is reduced by DprE1 to a nitroso group, which then specifically reacts with Cys-386 of DprE1 to form an irreversible semimercaptal adduct. Other compounds with diverse scaffolds (dinitrobenzamides and nitrobenzoquinoxalines) also act as covalent DprE1 inhibitors. In terms of biological role, component of the DprE1-DprE2 complex that catalyzes the 2-step epimerization of decaprenyl-phospho-ribose (DPR) to decaprenyl-phospho-arabinose (DPA), a key precursor that serves as the arabinose donor required for the synthesis of cell-wall arabinans. DprE1 catalyzes the first step of epimerization, namely FAD-dependent oxidation of the C2' hydroxyl of DPR to yield the keto intermediate decaprenyl-phospho-2'-keto-D-arabinose (DPX). The intermediate DPX is then transferred to DprE2 subunit of the epimerase complex, most probably through a 'substrate channel' at the interface of DprE1-DprE2 complex. Can also use farnesyl-phosphoryl-beta-D-ribofuranose (FPR) as substrate in vitro. Appears to be essential for the growth of M.smegmatis. The chain is Decaprenylphosphoryl-beta-D-ribose oxidase from Mycolicibacterium smegmatis (strain ATCC 700084 / mc(2)155) (Mycobacterium smegmatis).